A 241-amino-acid polypeptide reads, in one-letter code: Endodeoxyribonuclease NucC (241 aa).

Active-site residues include Asp73, Glu104, and Lys106. 2 residues coordinate Mg(2+): Asp73 and Glu104.

Belongs to the NucC endonuclease family. As to quaternary structure, self-oligomerizes. Forms homotrimers; in the presence of cAAA the trimers associate face-to-face to form homohexamers. The 2 cAAA-binding sites are on the exterior of the hexamer at the three-way junction, there are maximally 2 cyclic nucleotides per hexamer. It depends on Mg(2+) as a cofactor.

With respect to regulation, activated by cAAA and to a lesser extent cAA; both cyclic nucleotides are products of its cognate CD-NTase. Cyclic nucleotide binding causes hexamerization. Effector DNase of a CBASS antivirus system. CBASS (cyclic oligonucleotide-based antiphage signaling system) provides immunity against bacteriophage. The CD-NTase protein synthesizes cyclic nucleotides in response to infection; these serve as specific second messenger signals. The signals activate a diverse range of effectors, leading to bacterial cell death and thus abortive phage infection. A type III-C(AAA) CBASS system. In terms of biological role, a cyclic nucleotide-activated dsDNase. In the presence of 3',3',3'-cyclic AMP-AMP-AMP (cAAA) and to a lesser extent cyclic-di-AMP (c-di-AMP), endonucleolytically degrades dsDNA. Binds one cAAA in a pocket on one surface of the trimer; cAAA binding promotes hexamerization which is probably necessary for nuclease activation. The nuclease digests dsDNA to about 50 bp lengths. DNA has been modeled to contact a pair of juxtaposed active sites (one from each layer of the hexamer), accounting for cleavage on both strands. The sequence is that of Endodeoxyribonuclease NucC from Pseudomonas aeruginosa.